The chain runs to 395 residues: Transmembrane protein 79 (395 aa).

A disordered region spans residues 1-115 (MTEPETLALL…PPTKLEELPE (115 aa)). Over 1–204 (MTEPETLALL…GREALRAVAS (204 aa)) the chain is Cytoplasmic. A helical membrane pass occupies residues 205–225 (VGAALILFPCLLYGAYAFLPF). The Extracellular segment spans residues 226–244 (DAPRLPTMSSRLIYTLRCG). Residues 245-265 (VFATFPIVLGILVYGLSLLCF) traverse the membrane as a helical segment. Residues 266–290 (AALRPFGEPRREVEIHRQYVAQSVQ) are Cytoplasmic-facing. Residues 291 to 311 (LFILYFFNLAVLSTYLPQDAL) form a helical membrane-spanning segment. Residues 312 to 313 (KL) lie on the Extracellular side of the membrane. A helical transmembrane segment spans residues 314 to 334 (LPLLTGLFAISRLIYWLTFAV). Over 335–343 (GRSFRGFGY) the chain is Cytoplasmic. A helical transmembrane segment spans residues 344–364 (GLTFLPLLSMLLWNFYYMFVV). Topologically, residues 365–395 (EPERMLTASESRLDYPDHARSASDYRPRSRG) are extracellular.

It localises to the lysosome. The protein localises to the golgi apparatus. Its subcellular location is the trans-Golgi network. The protein resides in the membrane. Contributes to the epidermal integrity and skin barrier function. Plays a role in the lamellar granule (LG) secretory system and in the stratum corneum (SC) epithelial cell formation. This Bos taurus (Bovine) protein is Transmembrane protein 79 (TMEM79).